The sequence spans 290 residues: ATP synthase gamma chain (290 aa).

Belongs to the ATPase gamma chain family. F-type ATPases have 2 components, CF(1) - the catalytic core - and CF(0) - the membrane proton channel. CF(1) has five subunits: alpha(3), beta(3), gamma(1), delta(1), epsilon(1). CF(0) has three main subunits: a, b and c.

The protein localises to the cell inner membrane. Functionally, produces ATP from ADP in the presence of a proton gradient across the membrane. The gamma chain is believed to be important in regulating ATPase activity and the flow of protons through the CF(0) complex. The sequence is that of ATP synthase gamma chain from Paracoccus denitrificans (strain Pd 1222).